A 92-amino-acid chain; its full sequence is Putative septation protein SpoVG (92 aa).

This sequence belongs to the SpoVG family.

Could be involved in septation. This Clostridioides difficile (strain 630) (Peptoclostridium difficile) protein is Putative septation protein SpoVG.